Reading from the N-terminus, the 98-residue chain is NADH-ubiquinone oxidoreductase chain 4L (98 aa).

The next 3 membrane-spanning stretches (helical) occupy residues 1-21 (MTPTHFTISSAFLLGMMGLAF), 26-46 (LLSALLCLEAMMLALFIALSL), and 59-79 (APMLMLAFSACEASAGLALLV).

The protein belongs to the complex I subunit 4L family.

Its subcellular location is the mitochondrion membrane. It catalyses the reaction a ubiquinone + NADH + 5 H(+)(in) = a ubiquinol + NAD(+) + 4 H(+)(out). Core subunit of the mitochondrial membrane respiratory chain NADH dehydrogenase (Complex I) which catalyzes electron transfer from NADH through the respiratory chain, using ubiquinone as an electron acceptor. Part of the enzyme membrane arm which is embedded in the lipid bilayer and involved in proton translocation. The chain is NADH-ubiquinone oxidoreductase chain 4L (MT-ND4L) from Gadus morhua (Atlantic cod).